We begin with the raw amino-acid sequence, 339 residues long: MRTVLVALLALVALTQAISPLDLIKEEWHTYKLQHRKNYANEVEERFRMKIFNENRHKIAKHNQLFAQGKVSYKLGLNKYADMLHHEFKETMNGYNHTLRQLMRERTGLVGATYIPPAHVTVPKSVDWREHGAVTGVKDQGHCGSCWAFSSTGALEGQHFRKAGVLVSLSEQNLVDCSTKYGNNGCNGGLMDNAFRYIKDNGGIDTEKSYPYEGIDDSCHFNKATIGATDTGFVDIPEGDEEKMKKAVATMGPVSVAIDASHESFQLYSEGVYNEPECDEQNLDHGVLVVGYGTDESGMDYWLVKNSWGTTWGEQGYIKMARNQNNQCGIATASSYPTV.

The first 17 residues, 1–17 (MRTVLVALLALVALTQA), serve as a signal peptide directing secretion. The propeptide at 18 to 121 (ISPLDLIKEE…ATYIPPAHVT (104 aa)) is activation peptide. Asn-96 carries N-linked (GlcNAc...) asparagine glycosylation. Cystine bridges form between Cys-143–Cys-186, Cys-177–Cys-219, and Cys-278–Cys-328. Residue Cys-146 is part of the active site. His-285 is a catalytic residue. Positions 295-298 (DESG) are excised as a propeptide. The active site involves Asn-306.

The protein belongs to the peptidase C1 family. As to quaternary structure, dimer of a heavy and a light chain linked by disulfide bonds.

It is found in the lysosome. It catalyses the reaction Specificity close to that of papain. As compared to cathepsin B, cathepsin L exhibits higher activity toward protein substrates, but has little activity on Z-Arg-Arg-NHMec, and no peptidyl-dipeptidase activity.. Its function is as follows. Important for the overall degradation of proteins in lysosomes. Required for differentiation of imaginal disks. The polypeptide is Cathepsin L (Sarcophaga peregrina (Flesh fly)).